The sequence spans 90 residues: UPF0729 protein Bm1_03610 (90 aa).

This sequence belongs to the UPF0729 family.

In Brugia malayi (Filarial nematode worm), this protein is UPF0729 protein Bm1_03610.